The chain runs to 386 residues: TRIBOA-glucoside O-methyltransferase BX7 (386 aa).

S-adenosyl-L-methionine is bound by residues Gly-224, Asp-248, Met-270, and Lys-283. Residue His-287 is the Proton acceptor of the active site.

It belongs to the class I-like SAM-binding methyltransferase superfamily. Cation-independent O-methyltransferase family. COMT subfamily. Expressed in seedlings and newly formed crown roots. Highest expression in the scutellar node. Low to non detectable levels in cob, tassel and mature organs like husk or leaves.

The enzyme catalyses TRIBOA beta-D-glucoside + S-adenosyl-L-methionine = DIMBOA beta-D-glucoside + S-adenosyl-L-homocysteine + H(+). O-methyltransferase involved in the benzoxazinoid glucoside biosynthesis. Can use 2,4,7-trihydroxy-2H-1,4-benzoxazin-3(4H)-one 2-D-glucoside (TRIBOA-glucoside) as substrate, but not aglucone TRIBOA, caffeic acid, ferulic acid, apigenin or quercetin. The protein is TRIBOA-glucoside O-methyltransferase BX7 (BX7) of Zea mays (Maize).